The following is a 518-amino-acid chain: DNA nucleotidylexotransferase (518 aa).

The short motif at Phe11 to Lys17 is the Nuclear localization signal element. In terms of domain architecture, BRCT spans Ile27–Gln124. The tract at residues Ser153–Ala518 is mediates interaction with DNTTIP2. Positions Val260–Thr264 are involved in DNA binding. A 2'-deoxyribonucleoside 5'-triphosphate-binding positions include Gly335–Lys340 and His344–Asp347. Mg(2+) is bound by residues Asp345, Asp347, and Asp442. Gly457–Trp458 is an a 2'-deoxyribonucleoside 5'-triphosphate binding site.

Belongs to the DNA polymerase type-X family. Interacts with PRP19 and DNTTIP1. Interacts with TRERF1. Forms a ternary complex with DNTTIP2 and core histone. Released from this complex by PCNA. Mg(2+) is required as a cofactor.

Its subcellular location is the nucleus. It carries out the reaction DNA(n) + a 2'-deoxyribonucleoside 5'-triphosphate = DNA(n+1) + diphosphate. Functionally, template-independent DNA polymerase which catalyzes the random addition of deoxynucleoside 5'-triphosphate to the 3'-end of a DNA initiator. One of the in vivo functions of this enzyme is the addition of nucleotides at the junction (N region) of rearranged Ig heavy chain and T-cell receptor gene segments during the maturation of B- and T-cells. In Monodelphis domestica (Gray short-tailed opossum), this protein is DNA nucleotidylexotransferase (DNTT).